We begin with the raw amino-acid sequence, 443 residues long: Probable D-serine dehydratase (443 aa).

Position 118 is an N6-(pyridoxal phosphate)lysine (Lys-118).

It belongs to the serine/threonine dehydratase family. DsdA subfamily. It depends on pyridoxal 5'-phosphate as a cofactor.

The enzyme catalyses D-serine = pyruvate + NH4(+). This chain is Probable D-serine dehydratase, found in Colwellia psychrerythraea (strain 34H / ATCC BAA-681) (Vibrio psychroerythus).